We begin with the raw amino-acid sequence, 155 residues long: Putative pre-16S rRNA nuclease (155 aa).

It belongs to the YqgF nuclease family.

It is found in the cytoplasm. In terms of biological role, could be a nuclease involved in processing of the 5'-end of pre-16S rRNA. The polypeptide is Putative pre-16S rRNA nuclease (Xanthomonas euvesicatoria pv. vesicatoria (strain 85-10) (Xanthomonas campestris pv. vesicatoria)).